The following is a 496-amino-acid chain: Cruciferin BnC2 (496 aa).

The signal sequence occupies residues 1-23 (MARLSSLLYFSITVLIFLHGSTA). Intrachain disulfides connect Cys-30–Cys-63 and Cys-106–Cys-313. Cupin type-1 domains follow at residues 35-269 (LNAL…RTAQ) and 319-468 (DNLD…EEAR). Position 109 is a phosphothreonine (Thr-109). The tract at residues 114–170 (SVFQPGSGSPFGEGQGQGQQGQGQGQGQGQGKGQQGQGKGQQGQSQGQQGQGQGFRD) is disordered. Residues 122-154 (SPFGEGQGQGQQGQGQGQGQGQGKGQQGQGKGQ) show a composition bias toward gly residues. Phosphotyrosine is present on Tyr-336. Residue Ser-338 is modified to Phosphoserine. Position 432 is a phosphothreonine (Thr-432).

It belongs to the 11S seed storage protein (globulins) family. In terms of assembly, hexamer; each subunit is composed of an acidic and a basic chain derived from a single precursor and linked by a disulfide bond.

In terms of biological role, this is a seed storage protein. The chain is Cruciferin BnC2 (BnC2) from Brassica napus (Rape).